The primary structure comprises 569 residues: Rab GTPase-binding effector protein 2 (569 aa).

3 disordered regions span residues 1 to 38, 181 to 267, and 388 to 414; these read MAAAAPVAADDDERRRRPGAALEDSRPQEGANGEAELG, QRRP…ASLV, and RAEQLPSSAPQGPQQEQGEEESLPSSV. The residue at position 2 (Ala2) is an N-acetylalanine. Residues 29 to 38 show a composition bias toward low complexity; it reads EGANGEAELG. Residues 34 to 184 adopt a coiled-coil conformation; sequence EAELGELSRL…ELIQEIQRRP (151 aa). Phosphoserine is present on residues Ser189, Ser193, Ser200, and Ser204. A compositionally biased stretch (low complexity) spans 245–257; that stretch reads SSSSLPRSRQGLS. A coiled-coil region spans residues 292–391; the sequence is WEQLQMEGRQ…EENQGLRAEQ (100 aa). The span at 393 to 403 shows a compositional bias: low complexity; the sequence is PSSAPQGPQQE. Residues 423-523 adopt a coiled-coil conformation; sequence RTRQEARAQL…LQAELETSEQ (101 aa).

The protein belongs to the rabaptin family. In terms of assembly, heterodimer with RABGEF1. The dimer binds RAB5A that has been activated by GTP-binding. Interacts with SDCCAG8; this interaction is important for ciliogenesis regulation. Interacts with RAB4; this interaction may mediate VEGFR2 cell surface expression.

It localises to the cytoplasm. The protein localises to the early endosome. Its subcellular location is the cytoskeleton. It is found in the microtubule organizing center. The protein resides in the centrosome. It localises to the cilium basal body. In terms of biological role, plays a role in membrane trafficking and in homotypic early endosome fusion. Participates in arteriogenesis by regulating vascular endothelial growth factor receptor 2/VEGFR2 cell surface expression and endosomal trafficking. By interacting with SDCCAG8, localizes to centrosomes and plays a critical role in ciliogenesis. This is Rab GTPase-binding effector protein 2 (RABEP2) from Pongo abelii (Sumatran orangutan).